The sequence spans 90 residues: uncharacterized protein (90 aa).

Lysine 88 participates in a covalent cross-link: Isoglutamyl lysine isopeptide (Lys-Gln) (interchain with Q-Cter in protein Pup).

This is an uncharacterized protein from Mycolicibacterium smegmatis (strain ATCC 700084 / mc(2)155) (Mycobacterium smegmatis).